A 339-amino-acid polypeptide reads, in one-letter code: MAARVGINGFGRIGRLVLRVLLSRGMPANVVLINDPFITTDAMAYIFKYDTVHGRFPGTVVGKEGKLEITLNGHVYDIAVSACKNPAEIPWGASNVEVVIESSGAFTTMEKAHLHQQGGAKKVLITAPSADAPMFVYGVNHQSLKADQTVFSNASCTTNCLAPLTKVINDKFGIVRGLMTTVHSTTATQKTVDGPSGKAWRDGRAAAGNIIPSSTGAAKAVTAVIPELKGRLTGMSFRVPTLNVSVVDLTAELKTPATYEEICNAVREAANGELKGVLGYTDEQVVSSDFVGEPMSSIFDAKAGIALDKTFVKLVSWYDNEWGYSNRVVDLLLHSLSLH.

NAD(+) contacts are provided by residues 12–13, Asp35, and Lys84; that span reads RI. D-glyceraldehyde 3-phosphate-binding positions include 155–157, Thr186, 215–216, and Arg238; these read SCT and TG. The active-site Nucleophile is the Cys156. Asn320 is a binding site for NAD(+).

This sequence belongs to the glyceraldehyde-3-phosphate dehydrogenase family. In terms of assembly, homotetramer.

The protein localises to the cytoplasm. It catalyses the reaction D-glyceraldehyde 3-phosphate + phosphate + NAD(+) = (2R)-3-phospho-glyceroyl phosphate + NADH + H(+). The protein operates within carbohydrate degradation; glycolysis; pyruvate from D-glyceraldehyde 3-phosphate: step 1/5. This chain is Glyceraldehyde-3-phosphate dehydrogenase (GAPD), found in Mastigamoeba balamuthi (Phreatamoeba balamuthi).